The following is a 657-amino-acid chain: Methylenetetrahydrofolate reductase 1 (657 aa).

Glu-18 (proton donor/acceptor) is an active-site residue. NAD(+) is bound by residues 18 to 23 (EFFPPK) and 49 to 50 (TW). Residues 49 to 50 (TW), His-78, and 108 to 110 (RGD) contribute to the FAD site. Asp-110 is a binding site for substrate. Residue Ser-120 is modified to Phosphoserine. Residues 129-130 (YA), Tyr-152, Asp-171, and Lys-178 contribute to the FAD site. Residues Gln-189 and Tyr-286 each contribute to the substrate site. The residue at position 301 (Ser-301) is a Phosphoserine. The segment at 308–329 (VNESSEEEGEDETSGEIGSIEN) is disordered. The segment covering 311 to 321 (SSEEEGEDETS) has biased composition (acidic residues). The residue at position 358 (Ser-358) is a Phosphoserine.

The protein belongs to the methylenetetrahydrofolate reductase family. FAD is required as a cofactor.

It carries out the reaction (6S)-5-methyl-5,6,7,8-tetrahydrofolate + NADP(+) = (6R)-5,10-methylene-5,6,7,8-tetrahydrofolate + NADPH + H(+). The enzyme catalyses (6S)-5-methyl-5,6,7,8-tetrahydrofolate + NAD(+) = (6R)-5,10-methylene-5,6,7,8-tetrahydrofolate + NADH + H(+). Its pathway is one-carbon metabolism; tetrahydrofolate interconversion. This is Methylenetetrahydrofolate reductase 1 (MET12) from Saccharomyces cerevisiae (strain ATCC 204508 / S288c) (Baker's yeast).